Consider the following 369-residue polypeptide: Aminomethyltransferase (369 aa).

The protein belongs to the GcvT family. As to quaternary structure, the glycine cleavage system is composed of four proteins: P, T, L and H.

The enzyme catalyses N(6)-[(R)-S(8)-aminomethyldihydrolipoyl]-L-lysyl-[protein] + (6S)-5,6,7,8-tetrahydrofolate = N(6)-[(R)-dihydrolipoyl]-L-lysyl-[protein] + (6R)-5,10-methylene-5,6,7,8-tetrahydrofolate + NH4(+). In terms of biological role, the glycine cleavage system catalyzes the degradation of glycine. This chain is Aminomethyltransferase, found in Synechococcus sp. (strain CC9311).